Reading from the N-terminus, the 239-residue chain is Adapter protein MecA (239 aa).

A compositionally biased stretch (basic and acidic residues) spans 118–128 (EQRTKEKEAQG). A disordered region spans residues 118-137 (EQRTKEKEAQGSKRQKSSAR).

Belongs to the MecA family. As to quaternary structure, homodimer.

Its function is as follows. Enables the recognition and targeting of unfolded and aggregated proteins to the ClpC protease or to other proteins involved in proteolysis. The protein is Adapter protein MecA of Staphylococcus aureus (strain Mu3 / ATCC 700698).